The chain runs to 400 residues: Melanization protease 1 (400 aa).

A signal peptide spans 1–22 (MEPHFFFTVLWMLLMGTSSTYA). Positions 23-137 (QEIFGYCRTP…PNCGENFGDR (115 aa)) are cleaved as a propeptide — activation peptide. The Clip domain maps to 28-91 (YCRTPDENSG…FCFTNVQICC (64 aa)). 3 disulfide bridges follow: Cys29–Cys90, Cys39–Cys70, and Cys45–Cys91. Residues 98–120 (NQQPQWGNHPQPTQTTKPTKRSG) form a disordered region. 3 disulfides stabilise this stretch: Cys130/Cys268, Cys168/Cys184, and Cys210/Cys220. The region spanning 138–399 (VVGGNETTKR…YLNWIENNVR (262 aa)) is the Peptidase S1 domain. A glycan (N-linked (GlcNAc...) asparagine) is linked at Asn142. Catalysis depends on His183, which acts as the Charge relay system. Residues Glu201, Asp203, Thr206, and Asp209 each contribute to the Ca(2+) site. Asp248 (charge relay system) is an active-site residue. Asn296 is a glycosylation site (N-linked (GlcNAc...) asparagine). Cystine bridges form between Cys315–Cys332 and Cys342–Cys375. The active-site Charge relay system is the Ser346.

It belongs to the peptidase S1 family. CLIP subfamily.

Functionally, serine protease which plays an essential role in the melanization immune response by acting downstream of sp7 to activate prophenoloxidase (PPO1). May function in diverse Hayan-dependent PPO1-activating cascades that are negatively controlled by different serpin proteins; Spn27A in the hemolymph and Spn77BA in the trachea. Regulation of melanization and PPO1 activation appears to be largely independent of the Toll signaling pathway. The polypeptide is Melanization protease 1 (Drosophila melanogaster (Fruit fly)).